Here is a 525-residue protein sequence, read N- to C-terminus: Polyamine aminopropyltransferase 1 (525 aa).

6 helical membrane passes run 21 to 41, 53 to 73, 89 to 109, 117 to 137, 155 to 175, and 180 to 200; these read ALLVLAVFVVASCGLAYELIA, ILQFSSIIGAYLFAMGIGSWV, LELLVGLFGGVSAAALFLLFA, LVLYALVTVIGVLVGMEIPLV, VLTFDYLGALAVSLLFPLVLA, and LVRTGFLFGLCNTAIAVWTLW. Residues 220–464 enclose the PABS domain; the sequence is AGMVGAALLA…GEWGFILAAP (245 aa). Residues 222–471 form a spermidine synthase region; the sequence is MVGAALLAGF…AAPGRADFRP (250 aa). An S-methyl-5'-thioadenosine-binding site is contributed by Q259. 2 residues coordinate spermidine: H289 and D313. S-methyl-5'-thioadenosine-binding positions include D333 and 367 to 368; that span reads DA. The active-site Proton acceptor is D385.

It belongs to the spermidine/spermine synthase family. In terms of assembly, homodimer or homotetramer.

Its subcellular location is the cell membrane. It catalyses the reaction S-adenosyl 3-(methylsulfanyl)propylamine + putrescine = S-methyl-5'-thioadenosine + spermidine + H(+). Its pathway is amine and polyamine biosynthesis; spermidine biosynthesis; spermidine from putrescine: step 1/1. Its function is as follows. Catalyzes the irreversible transfer of a propylamine group from the amino donor S-adenosylmethioninamine (decarboxy-AdoMet) to putrescine (1,4-diaminobutane) to yield spermidine. The sequence is that of Polyamine aminopropyltransferase 1 from Ralstonia nicotianae (strain ATCC BAA-1114 / GMI1000) (Ralstonia solanacearum).